The sequence spans 335 residues: uncharacterized protein (335 aa).

The next 4 membrane-spanning stretches (helical) occupy residues 104–124 (FKKVVIYMIITFLALLFMGLL), 128–148 (LLQGFVNGLIGAGIILVLSLF), 280–300 (LAFGVGLILPFTGMILSTMIG), and 310–330 (TINLLLLKIGPLLTLIFGIFV).

It localises to the cell membrane. This is an uncharacterized protein from Methanocaldococcus jannaschii (strain ATCC 43067 / DSM 2661 / JAL-1 / JCM 10045 / NBRC 100440) (Methanococcus jannaschii).